We begin with the raw amino-acid sequence, 802 residues long: MDMNENKVRKKRHRITVVCTNCKKRKSKCDRGKPCSNCTRIGIENSCLYIKDTPSLPIDSIGSVADLTASELQIPNFIPIHPSYNKEYVNYIPNGRFFEIKRSAYTMFPIFTDACIEHRDAVIKAFTTFRTIVVKKTIDHYRKTGIDIERIALAGSQGLPKSFLPLTVFDEESSKNLVLEQQEPQQSYQIHSLLAEKFSHYRKNANLKLGDDSTTVYHNLIIKSLPDLGLLMDTIIPYYEQFIEPLVPIIEFKDFNVEIQKLYAKIELSNSLDPKIGENTLACIILLICRLCHLSSKFAVEKSINSSNYESILNMDTNIFVSLVQRTATGEKPLRKGTLYELQLLIMLRLCYWVGPDDGDGQQVEQSEILHGAIVSMCKHMGVWWDLVKYSEDSDLFITVDYKAVPKLGSQSEYIKLFRKIWCYVLCWDRKMMLLTGQECEIGRSYKMSPAPRFGNGWCDDILQYDYLLYGINNELHDDARKVDISMLEELVEMSEMRMGVLKEDDFSSNIYREQKLSLMLMKLNIIHGQLSWYERTGDKQSQETAYAKLFTLTVELGSKCVEYFSTPGIPEQRFYMNKIYEVILNRLNNVIVPGLILRIRYEEETGLDGMVKYLYGMSSMYFNEIGKEYYRTFKKMFHGKINYKILENGHRCMDMIIKFLQREMQNNNDTAVSKGDSMKLSDRLPLVAWDSNSTNDMFEPIHTVPRGPEIAALILEMVNVSDRYHYNNNVFQTVYKEARLVIDETTTTSQQDSLASAGTNRTNNIATNSGSGDDGGNGSDDSYLMRLIQELFDPLDFASAF.

The segment at residues 19-47 (CTNCKKRKSKCDRGKPCSNCTRIGIENSC) is a DNA-binding region (zn(2)-C6 fungal-type). Polar residues predominate over residues 749-768 (TSQQDSLASAGTNRTNNIAT). Positions 749–779 (TSQQDSLASAGTNRTNNIATNSGSGDDGGNG) are disordered.

Belongs to the OAF3 family.

It is found in the cytoplasm. It localises to the nucleus. The protein resides in the mitochondrion. Transcriptional inhibitor with a significantly increased number of target genes in response to oleate. The chain is Oleate activated transcription factor 3 (OAF3) from Vanderwaltozyma polyspora (strain ATCC 22028 / DSM 70294 / BCRC 21397 / CBS 2163 / NBRC 10782 / NRRL Y-8283 / UCD 57-17) (Kluyveromyces polysporus).